The chain runs to 464 residues: ATP synthase subunit beta (464 aa).

Position 153-160 (153-160 (GGAGVGKT)) interacts with ATP.

The protein belongs to the ATPase alpha/beta chains family. As to quaternary structure, F-type ATPases have 2 components, CF(1) - the catalytic core - and CF(0) - the membrane proton channel. CF(1) has five subunits: alpha(3), beta(3), gamma(1), delta(1), epsilon(1). CF(0) has three main subunits: a(1), b(2) and c(9-12). The alpha and beta chains form an alternating ring which encloses part of the gamma chain. CF(1) is attached to CF(0) by a central stalk formed by the gamma and epsilon chains, while a peripheral stalk is formed by the delta and b chains.

Its subcellular location is the cell inner membrane. It carries out the reaction ATP + H2O + 4 H(+)(in) = ADP + phosphate + 5 H(+)(out). Functionally, produces ATP from ADP in the presence of a proton gradient across the membrane. The catalytic sites are hosted primarily by the beta subunits. The polypeptide is ATP synthase subunit beta (Burkholderia cenocepacia (strain ATCC BAA-245 / DSM 16553 / LMG 16656 / NCTC 13227 / J2315 / CF5610) (Burkholderia cepacia (strain J2315))).